Consider the following 347-residue polypeptide: NADH-quinone oxidoreductase subunit H (347 aa).

The next 9 membrane-spanning stretches (helical) occupy residues 13–33, 50–70, 82–102, 115–135, 161–181, 198–218, 263–283, 286–306, and 321–341; these read IIMI…IAYV, PNVV…KFVF, AVFL…WAVV, VGIL…IMGG, IGFV…TDIV, FLDW…ISAL, CSLT…IWIL, VPGI…FAMV, and LGWK…AFVL.

This sequence belongs to the complex I subunit 1 family. In terms of assembly, NDH-1 is composed of 14 different subunits. Subunits NuoA, H, J, K, L, M, N constitute the membrane sector of the complex.

It is found in the cell inner membrane. It carries out the reaction a quinone + NADH + 5 H(+)(in) = a quinol + NAD(+) + 4 H(+)(out). Its function is as follows. NDH-1 shuttles electrons from NADH, via FMN and iron-sulfur (Fe-S) centers, to quinones in the respiratory chain. The immediate electron acceptor for the enzyme in this species is believed to be ubiquinone. Couples the redox reaction to proton translocation (for every two electrons transferred, four hydrogen ions are translocated across the cytoplasmic membrane), and thus conserves the redox energy in a proton gradient. This subunit may bind ubiquinone. The protein is NADH-quinone oxidoreductase subunit H of Rhizobium leguminosarum bv. trifolii (strain WSM2304).